A 145-amino-acid polypeptide reads, in one-letter code: Mannitol-specific phosphotransferase enzyme IIA component (145 aa).

In terms of domain architecture, PTS EIIA type-2 spans 4–144; the sequence is PILKKENIVL…EEILSILNEV (141 aa). Residue histidine 64 is the Tele-phosphohistidine intermediate of the active site. A Phosphohistidine; by HPr modification is found at histidine 64.

The protein resides in the cytoplasm. Functionally, the phosphoenolpyruvate-dependent sugar phosphotransferase system (sugar PTS), a major carbohydrate active transport system, catalyzes the phosphorylation of incoming sugar substrates concomitantly with their translocation across the cell membrane. The enzyme II CmtAB PTS system is involved in D-mannitol transport. This Geobacillus stearothermophilus (Bacillus stearothermophilus) protein is Mannitol-specific phosphotransferase enzyme IIA component.